Consider the following 196-residue polypeptide: Nucleoside triphosphate pyrophosphatase (196 aa).

The active-site Proton acceptor is D73.

Belongs to the Maf family. A divalent metal cation is required as a cofactor.

The protein localises to the cytoplasm. It carries out the reaction a ribonucleoside 5'-triphosphate + H2O = a ribonucleoside 5'-phosphate + diphosphate + H(+). The catalysed reaction is a 2'-deoxyribonucleoside 5'-triphosphate + H2O = a 2'-deoxyribonucleoside 5'-phosphate + diphosphate + H(+). Functionally, nucleoside triphosphate pyrophosphatase. May have a dual role in cell division arrest and in preventing the incorporation of modified nucleotides into cellular nucleic acids. The polypeptide is Nucleoside triphosphate pyrophosphatase (Anaplasma marginale (strain St. Maries)).